A 306-amino-acid polypeptide reads, in one-letter code: Ribonuclease Z (306 aa).

Histidine 63, histidine 65, aspartate 67, histidine 68, histidine 141, aspartate 211, and histidine 269 together coordinate Zn(2+). Aspartate 67 serves as the catalytic Proton acceptor.

It belongs to the RNase Z family. In terms of assembly, homodimer. Zn(2+) is required as a cofactor.

It catalyses the reaction Endonucleolytic cleavage of RNA, removing extra 3' nucleotides from tRNA precursor, generating 3' termini of tRNAs. A 3'-hydroxy group is left at the tRNA terminus and a 5'-phosphoryl group is left at the trailer molecule.. Zinc phosphodiesterase, which displays some tRNA 3'-processing endonuclease activity. Probably involved in tRNA maturation, by removing a 3'-trailer from precursor tRNA. This chain is Ribonuclease Z, found in Staphylococcus epidermidis (strain ATCC 35984 / DSM 28319 / BCRC 17069 / CCUG 31568 / BM 3577 / RP62A).